Here is a 101-residue protein sequence, read N- to C-terminus: NAD(P)H-quinone oxidoreductase subunit 4L, chloroplastic (101 aa).

The next 3 helical transmembrane spans lie at methionine 2 to isoleucine 22, methionine 32 to phenylalanine 52, and isoleucine 61 to valine 81.

This sequence belongs to the complex I subunit 4L family. As to quaternary structure, NDH is composed of at least 16 different subunits, 5 of which are encoded in the nucleus.

Its subcellular location is the plastid. It is found in the chloroplast thylakoid membrane. The catalysed reaction is a plastoquinone + NADH + (n+1) H(+)(in) = a plastoquinol + NAD(+) + n H(+)(out). The enzyme catalyses a plastoquinone + NADPH + (n+1) H(+)(in) = a plastoquinol + NADP(+) + n H(+)(out). NDH shuttles electrons from NAD(P)H:plastoquinone, via FMN and iron-sulfur (Fe-S) centers, to quinones in the photosynthetic chain and possibly in a chloroplast respiratory chain. The immediate electron acceptor for the enzyme in this species is believed to be plastoquinone. Couples the redox reaction to proton translocation, and thus conserves the redox energy in a proton gradient. This chain is NAD(P)H-quinone oxidoreductase subunit 4L, chloroplastic, found in Calycanthus floridus var. glaucus (Eastern sweetshrub).